A 597-amino-acid polypeptide reads, in one-letter code: Large ribosomal subunit assembly factor BipA (597 aa).

The tr-type G domain maps to 3–198 (LPIRNVAIIA…AILHHVPPPA (196 aa)). Residues 15-20 (DHGKTT) and 128-131 (NKID) contribute to the GTP site.

This sequence belongs to the TRAFAC class translation factor GTPase superfamily. Classic translation factor GTPase family. BipA subfamily. Monomer.

It is found in the cytoplasm. The enzyme catalyses GTP + H2O = GDP + phosphate + H(+). Functionally, a 50S ribosomal subunit assembly protein with GTPase activity, required for 50S subunit assembly at low temperatures, may also play a role in translation. Binds GTP and analogs. Binds the 70S ribosome between the 30S and 50S subunits, in a similar position as ribosome-bound EF-G; it contacts a number of ribosomal proteins, both rRNAs and the A-site tRNA. This chain is Large ribosomal subunit assembly factor BipA, found in Synechocystis sp. (strain ATCC 27184 / PCC 6803 / Kazusa).